The chain runs to 584 residues: Inactive metallocarboxypeptidase ECM14 (584 aa).

The first 20 residues, 1–20, serve as a signal peptide directing secretion; it reads MHLLPVITAVALIYTPLASA. A propeptide spanning residues 21 to 174 is cleaved from the precursor; that stretch reads VPSSSNPQFP…QAVYESYPQP (154 aa). Residues 202 to 524 enclose the Peptidase M14 domain; that stretch reads DYQPLSVMTP…NAVLEFGKFL (323 aa). Residues His267 and Glu270 each contribute to the Zn(2+) site. Residues 267-270, Arg325, and 342-343 contribute to the substrate site; these read HARE and DR. An intrachain disulfide couples Cys336 to Cys359. N-linked (GlcNAc...) asparagine glycosylation is found at Asn383 and Asn389. Position 399 (His399) interacts with Zn(2+). 400 to 401 contacts substrate; the sequence is SY. The interval 564-584 is disordered; that stretch reads QQLDDEDGEADSHWVLRTQRS.

It belongs to the peptidase M14 family. It depends on Zn(2+) as a cofactor.

The protein localises to the vacuole. It is found in the secreted. In terms of biological role, inactive carboxypeptidase that may play a role in cell wall organization and biogenesis. This chain is Inactive metallocarboxypeptidase ECM14 (ECM14), found in Uncinocarpus reesii (strain UAMH 1704).